Consider the following 415-residue polypeptide: Levansucrase (415 aa).

Residues tryptophan 45, aspartate 46, alanine 132, arginine 202, and aspartate 203 each contribute to the sucrose site. Aspartate 46 acts as the Nucleophile in catalysis. Glutamate 287 serves as the catalytic Proton donor/acceptor.

It belongs to the glycosyl hydrolase 68 family.

It catalyses the reaction [6)-beta-D-fructofuranosyl-(2-&gt;](n) alpha-D-glucopyranoside + sucrose = [6)-beta-D-fructofuranosyl-(2-&gt;](n+1) alpha-D-glucopyranoside + D-glucose. Catalyzes the synthesis of levan, a fructose polymer, by transferring the fructosyl moiety from sucrose to a growing acceptor molecule. The polypeptide is Levansucrase (Rahnella aquatilis (strain ATCC 33071 / DSM 4594 / JCM 1683 / NBRC 105701 / NCIMB 13365 / CIP 78.65)).